A 783-amino-acid polypeptide reads, in one-letter code: Putative ATP-dependent DNA helicase fml2 (783 aa).

Positions phenylalanine 118–lysine 286 constitute a Helicase ATP-binding domain. Leucine 131–threonine 138 serves as a coordination point for ATP. The short motif at aspartate 234–histidine 237 is the DEAH box element. The 170-residue stretch at lysine 450–valine 619 folds into the Helicase C-terminal domain.

The protein belongs to the DEAD box helicase family. DEAH subfamily. FANCM sub-subfamily.

The protein localises to the nucleus. Its subcellular location is the nucleolus. The enzyme catalyses ATP + H2O = ADP + phosphate + H(+). This is Putative ATP-dependent DNA helicase fml2 from Schizosaccharomyces pombe (strain 972 / ATCC 24843) (Fission yeast).